The following is a 146-amino-acid chain: Hemoglobin subunit beta (146 aa).

Residues 2 to 146 enclose the Globin domain; that stretch reads HWSAEEKQLI…VAHALARKYH (145 aa). Heme b-binding residues include histidine 63 and histidine 92.

The protein belongs to the globin family. In terms of assembly, heterotetramer of two alpha chains and two beta chains. In terms of tissue distribution, red blood cells.

In terms of biological role, involved in oxygen transport from the lung to the various peripheral tissues. This chain is Hemoglobin subunit beta (HBB), found in Eudyptes chrysocome (Western rockhopper penguin).